The primary structure comprises 388 residues: MKIHEYQGKEILRKFGVAVPRGKPAFSVDEAVKVAEELGGPVWVVKAQIHAGGRGKGGGVKVAKSIEQVREYANQILGMQLVTHQTGPEGQKVNRLMIEEGADIKQELYVSLVVDRISQKIVLMGSSEGGMDIEEVAEKHPELIHKVIVEPSTGLLDAQADDLAAKIGVPAASIPQARAILQGLYKAFWETDASLAEINPLNVSGDGKVIALDAKFNFDSNALFRHPEIVAYRDLDEEDPAEIEASKFDLAYISLDGNIGCLVNGAGLAMATMDTIKLFGGEPANFLDVGGGATTEKVTEAFKLMLKNPDLKAILVNIFGGIMRCDVIAEGVIAGSKAVNLNVPLVVRMKGTNEDLGKKMLADSGLPIISADSMEEAAQKVVAAAAGK.

The 236-residue stretch at 9–244 (KEILRKFGVA…LDEEDPAEIE (236 aa)) folds into the ATP-grasp domain. ATP is bound by residues K46, 53-55 (GRG), E99, A102, and E107. The Mg(2+) site is built by N199 and D213. Substrate contacts are provided by residues N264 and 321–323 (GIM).

This sequence belongs to the succinate/malate CoA ligase beta subunit family. As to quaternary structure, heterotetramer of two alpha and two beta subunits. Mg(2+) is required as a cofactor.

The enzyme catalyses succinate + ATP + CoA = succinyl-CoA + ADP + phosphate. It carries out the reaction GTP + succinate + CoA = succinyl-CoA + GDP + phosphate. It participates in carbohydrate metabolism; tricarboxylic acid cycle; succinate from succinyl-CoA (ligase route): step 1/1. Succinyl-CoA synthetase functions in the citric acid cycle (TCA), coupling the hydrolysis of succinyl-CoA to the synthesis of either ATP or GTP and thus represents the only step of substrate-level phosphorylation in the TCA. The beta subunit provides nucleotide specificity of the enzyme and binds the substrate succinate, while the binding sites for coenzyme A and phosphate are found in the alpha subunit. The polypeptide is Succinate--CoA ligase [ADP-forming] subunit beta (Burkholderia ambifaria (strain MC40-6)).